The sequence spans 148 residues: Large ribosomal subunit protein bL9 (148 aa).

It belongs to the bacterial ribosomal protein bL9 family.

Its function is as follows. Binds to the 23S rRNA. The polypeptide is Large ribosomal subunit protein bL9 (Streptomyces griseus subsp. griseus (strain JCM 4626 / CBS 651.72 / NBRC 13350 / KCC S-0626 / ISP 5235)).